Reading from the N-terminus, the 455-residue chain is Lysine histidine transporter-like 4 (455 aa).

At 1–38 (MAGIPDHIQDQHLVEEDQPFDLEDWLPITASRNANWYY) the chain is on the cytoplasmic side. A helical membrane pass occupies residues 39-59 (SAFHNVTAIVGAGVLGLPYAM). The Extracellular segment spans residues 60–61 (SE). The chain crosses the membrane as a helical span at residues 62–82 (LGWGPGVVVLILSWVITLYTL). Residues 83–113 (WQMIEMHEMFEGQRFDRYHELGQAAFGKKLG) lie on the Cytoplasmic side of the membrane. Residues 114–134 (LYIIVPLQLLVEISVCIVYMV) form a helical membrane-spanning segment. Over 135–158 (TGGKSLKNVHDLALGDGDKCTKLR) the chain is Extracellular. A helical transmembrane segment spans residues 159 to 179 (IQHFILIFASSQFVLSLLKNF). Topologically, residues 180–181 (NS) are cytoplasmic. Residues 182–202 (ISGVSLVAAVMSVSYSTIAWV) traverse the membrane as a helical segment. The Extracellular portion of the chain corresponds to 203–226 (ASLRKGATTGSVEYGYRKRTTSVP). Residues 227-247 (LAFLSALGEMAFAYAGHNVVL) traverse the membrane as a helical segment. Residues 248–267 (EIQATIPSTPENPSKRPMWK) lie on the Cytoplasmic side of the membrane. Residues 268-288 (GAVVAYIIVAFCYFPVALVGF) traverse the membrane as a helical segment. Over 289 to 307 (KTFGNSVEESILESLTKPT) the chain is Extracellular. Residues 308 to 328 (ALVIVANMFVVIHLLGSYQVY) form a helical membrane-spanning segment. Residues 329-357 (AMPVFDMIESVMIRIWHFSPTRVLRFTIR) lie on the Cytoplasmic side of the membrane. A helical membrane pass occupies residues 358–378 (WTFVAATMGIAVGLPYYSALL). Position 379 (Ser-379) is a topological domain, extracellular. A helical membrane pass occupies residues 380–400 (FFGGFVFAPTTYFIPCIMWLI). Residues 401 to 412 (LKKPKRFSLSWC) are Cytoplasmic-facing. A helical membrane pass occupies residues 413 to 433 (MNWFCIIFGLVLMIIAPIGGL). Residues 434–455 (AKLIYNIQKGTLPNSRCNLPKH) are Extracellular-facing.

The protein belongs to the amino acid/polyamine transporter 2 family. Amino acid/auxin permease (AAAP) (TC 2.A.18.2) subfamily.

It localises to the cell membrane. In terms of biological role, amino acid transporter. This Arabidopsis thaliana (Mouse-ear cress) protein is Lysine histidine transporter-like 4.